The following is a 136-amino-acid chain: Transport protein particle 20 kDa subunit (136 aa).

It belongs to the TRAPP small subunits family. Sedlin subfamily.

The protein resides in the cytoplasm. It localises to the golgi apparatus. Its subcellular location is the cis-Golgi network. It is found in the endoplasmic reticulum. Its function is as follows. Component of the TRAPP I and TRAPP II complexes. TRAPP I plays a key role in the late stages of endoplasmic reticulum to Golgi traffic. TRAPP II seems to play a role in intra-Golgi transport. The polypeptide is Transport protein particle 20 kDa subunit (trs20) (Schizosaccharomyces pombe (strain 972 / ATCC 24843) (Fission yeast)).